We begin with the raw amino-acid sequence, 231 residues long: Deoxyribose-phosphate aldolase (231 aa).

The active-site Proton donor/acceptor is aspartate 86. Lysine 147 (schiff-base intermediate with acetaldehyde) is an active-site residue. The Proton donor/acceptor role is filled by lysine 172. Residues 206–231 (WQAETAGETVTEPESDRDGADTTDGY) form a disordered region.

The protein belongs to the DeoC/FbaB aldolase family. DeoC type 1 subfamily.

It localises to the cytoplasm. The enzyme catalyses 2-deoxy-D-ribose 5-phosphate = D-glyceraldehyde 3-phosphate + acetaldehyde. The protein operates within carbohydrate degradation; 2-deoxy-D-ribose 1-phosphate degradation; D-glyceraldehyde 3-phosphate and acetaldehyde from 2-deoxy-alpha-D-ribose 1-phosphate: step 2/2. In terms of biological role, catalyzes a reversible aldol reaction between acetaldehyde and D-glyceraldehyde 3-phosphate to generate 2-deoxy-D-ribose 5-phosphate. In Haloarcula marismortui (strain ATCC 43049 / DSM 3752 / JCM 8966 / VKM B-1809) (Halobacterium marismortui), this protein is Deoxyribose-phosphate aldolase.